The chain runs to 98 residues: Large ribosomal subunit protein uL23 (98 aa).

This sequence belongs to the universal ribosomal protein uL23 family. Part of the 50S ribosomal subunit. Contacts protein L29, and trigger factor when it is bound to the ribosome.

In terms of biological role, one of the early assembly proteins it binds 23S rRNA. One of the proteins that surrounds the polypeptide exit tunnel on the outside of the ribosome. Forms the main docking site for trigger factor binding to the ribosome. The polypeptide is Large ribosomal subunit protein uL23 (Bordetella avium (strain 197N)).